We begin with the raw amino-acid sequence, 763 residues long: Phosphoglycerol transferase I (763 aa).

Transmembrane regions (helical) follow at residues 1 to 21 (MSEL…AWKA), 26 to 46 (WWFA…ITLY), 77 to 97 (ILPG…LGWV), and 108 to 128 (VGYS…SPAF).

This sequence belongs to the OpgB family.

The protein resides in the cell inner membrane. The catalysed reaction is a phosphatidylglycerol + a membrane-derived-oligosaccharide D-glucose = a 1,2-diacyl-sn-glycerol + a membrane-derived-oligosaccharide 6-(glycerophospho)-D-glucose.. It participates in glycan metabolism; osmoregulated periplasmic glucan (OPG) biosynthesis. Its function is as follows. Transfers a phosphoglycerol residue from phosphatidylglycerol to the membrane-bound nascent glucan backbones. The sequence is that of Phosphoglycerol transferase I from Salmonella heidelberg (strain SL476).